Consider the following 422-residue polypeptide: 26S proteasome non-ATPase regulatory subunit 11 (422 aa).

Ala2 carries the post-translational modification N-acetylalanine. Residues Ser14 and Ser23 each carry the phosphoserine modification. One can recognise a PCI domain in the interval 224-392 (DWKTAYSYFY…GVLIIFDEPP (169 aa)). Residue Lys274 forms a Glycyl lysine isopeptide (Lys-Gly) (interchain with G-Cter in SUMO2) linkage.

The protein belongs to the proteasome subunit S9 family. As to quaternary structure, component of the 19S proteasome regulatory particle complex. The 26S proteasome consists of a 20S core particle (CP) and two 19S regulatory subunits (RP). The regulatory particle is made of a lid composed of 9 subunits including PSMD11, a base containing 6 ATPases and few additional components.

Component of the 26S proteasome, a multiprotein complex involved in the ATP-dependent degradation of ubiquitinated proteins. This complex plays a key role in the maintenance of protein homeostasis by removing misfolded or damaged proteins, which could impair cellular functions, and by removing proteins whose functions are no longer required. Therefore, the proteasome participates in numerous cellular processes, including cell cycle progression, apoptosis, or DNA damage repair. In the complex, PSMD11 is required for proteasome assembly. Plays a key role in increased proteasome activity in embryonic stem cells (ESCs): its high expression in ESCs promotes enhanced assembly of the 26S proteasome, followed by higher proteasome activity. This Mus musculus (Mouse) protein is 26S proteasome non-ATPase regulatory subunit 11 (Psmd11).